The primary structure comprises 581 residues: Proline--tRNA ligase (581 aa).

This sequence belongs to the class-II aminoacyl-tRNA synthetase family. ProS type 1 subfamily. In terms of assembly, homodimer.

The protein localises to the cytoplasm. It catalyses the reaction tRNA(Pro) + L-proline + ATP = L-prolyl-tRNA(Pro) + AMP + diphosphate. In terms of biological role, catalyzes the attachment of proline to tRNA(Pro) in a two-step reaction: proline is first activated by ATP to form Pro-AMP and then transferred to the acceptor end of tRNA(Pro). As ProRS can inadvertently accommodate and process non-cognate amino acids such as alanine and cysteine, to avoid such errors it has two additional distinct editing activities against alanine. One activity is designated as 'pretransfer' editing and involves the tRNA(Pro)-independent hydrolysis of activated Ala-AMP. The other activity is designated 'posttransfer' editing and involves deacylation of mischarged Ala-tRNA(Pro). The misacylated Cys-tRNA(Pro) is not edited by ProRS. In Chlamydia trachomatis serovar A (strain ATCC VR-571B / DSM 19440 / HAR-13), this protein is Proline--tRNA ligase.